Reading from the N-terminus, the 493-residue chain is Neuronal acetylcholine receptor subunit alpha-6 (493 aa).

Residues 1–30 (MLNGWGRGDLRSGLCLWICGFLAFFKGSRG) form the signal peptide. Residues 31–240 (CVSEEQLFHT…TYSFYIRRLP (210 aa)) lie on the Extracellular side of the membrane. Asn-54 and Asn-171 each carry an N-linked (GlcNAc...) asparagine glycan. Intrachain disulfides connect Cys-158-Cys-172 and Cys-222-Cys-223. Helical transmembrane passes span 241–265 (MFYT…FYLP), 272–290 (VTLC…LVIT), and 306–327 (YLLF…VLNI). The Cytoplasmic portion of the chain corresponds to 328-464 (HYRTPATHTM…WKYMAMVVDR (137 aa)). A Phosphoserine modification is found at Ser-401. A helical transmembrane segment spans residues 465 to 484 (VFLWVFIIVCVFGTVGLFLQ).

The protein belongs to the ligand-gated ion channel (TC 1.A.9) family. Acetylcholine receptor (TC 1.A.9.1) subfamily. Alpha-6/CHRNA6 sub-subfamily. As to quaternary structure, neuronal AChR is composed of two different types of subunits: alpha and non-alpha (beta). CHRNA6/alpha-6 subunit can be combined to CHRNB2/beta-2 and CHRNA4/alpha-4 to give rise to functional receptors. Interacts with LYPD6. Predominantly expressed in only a few brain areas, including dopaminergic neurons, norepirephrine neurons and cells of the visual system.

The protein resides in the synaptic cell membrane. The enzyme catalyses Ca(2+)(in) = Ca(2+)(out). It catalyses the reaction K(+)(in) = K(+)(out). The catalysed reaction is Na(+)(in) = Na(+)(out). With respect to regulation, activated by a myriad of ligands such as acetylcholine, cytisine and nicotine. CHRNA6 nAChR activity is inhibited by the antagonists alpha-conotoxin MII and PIA, a small disulfide-constrained peptides from cone snails. Its function is as follows. Component of neuronal acetylcholine receptors (nAChRs) that function as pentameric, ligand-gated cation channels with high calcium permeability among other activities. nAChRs are excitatory neurotrasnmitter receptors formed by a collection of nAChR subunits known to mediate synaptic transmission in the nervous system and the neuromuscular junction. Each nAchR subunit confers differential attributes to channel properties, including activation, deactivation and desensitization kinetics, pH sensitivity, cation permeability, and binding to allosteric modulators. CHRNA6 forms pentameric channels with CHRNB2 and CHRNA4 that exhibit high sensitivity to ACh and nicotine and are predominantly expressed in only a few brain areas, including dopaminergic neurons, norepirephrine neurons and cells of the visual system. nAChrs containing CHRNA6 subunits mediate endogenous cholinergic modulation of dopamine and gamma-aminobutyric acid (GABA) release in response to nicotine at nerve terminals. The sequence is that of Neuronal acetylcholine receptor subunit alpha-6 (Chrna6) from Rattus norvegicus (Rat).